The following is a 352-amino-acid chain: C-C chemokine receptor type 5 (352 aa).

At 1 to 30 (MDYQVSSPTYDIDYYTSEPCQKIKVKQIAA) the chain is on the extracellular side. Sulfotyrosine is present on tyrosine 3. O-linked (GalNAc...) serine glycans are attached at residues serine 6 and serine 7. Tyrosine 10, tyrosine 14, and tyrosine 15 each carry sulfotyrosine. Intrachain disulfides connect cysteine 20–cysteine 269 and cysteine 101–cysteine 178. Residues 31 to 58 (RLLPPLYSLVFIFGFVGNILVVLILINC) form a helical membrane-spanning segment. Topologically, residues 59–68 (KRLKSMTDIY) are cytoplasmic. A helical membrane pass occupies residues 69–89 (LLNLAISDLLFLLTVPFWAHY). Over 90 to 102 (AAAQWDFGNTMCQ) the chain is Extracellular. Residues 103–124 (LLTGLYFIGFFSGIFFIILLTI) form a helical membrane-spanning segment. Residues 125-141 (DRYLAIVHAVFALKART) are Cytoplasmic-facing. A helical membrane pass occupies residues 142 to 166 (VTFGVVTSVITWVVAVFASLPRIIF). Topologically, residues 167 to 198 (TRSQREGLHYTCSSHFPYSQYQFWKNFQTLKI) are extracellular. The helical transmembrane segment at 199–218 (VILGLVLPLLVMVICYSGIL) threads the bilayer. The Cytoplasmic segment spans residues 219 to 235 (KTLLRCRNDKKRHRAVR). Residues 236-260 (LIFTIMIVYFLFWAPYNIVLLLNTF) form a helical membrane-spanning segment. At 261–277 (QEFFGLNNCSSSNRLDQ) the chain is on the extracellular side. The chain crosses the membrane as a helical span at residues 278–301 (AMQVTETLGMTHCCINPIIYAFVG). The Cytoplasmic portion of the chain corresponds to 302-352 (EKFRNYLLVFFQKHIAKRFCKCCSIFQQDAPERASSVYTRSTGEQETSVGL). Residues cysteine 321, cysteine 323, and cysteine 324 are each lipidated (S-palmitoyl cysteine). Phosphoserine; by BARK1 is present on residues serine 336, serine 337, serine 342, and serine 349.

This sequence belongs to the G-protein coupled receptor 1 family. In terms of assembly, interacts with PRAF2. Efficient ligand binding to CCL3/MIP-1alpha and CCL4/MIP-1beta requires sulfation, O-glycosylation and sialic acid modifications. Glycosylation on Ser-6 is required for efficient binding of CCL4. Interacts with GRK2. Interacts with ARRB1 and ARRB2. Interacts with CNIH4. Interacts with S100A4; this interaction stimulates T-lymphocyte chemotaxis. Post-translationally, sulfated on at least 2 of the N-terminal tyrosines. Sulfation is required for efficient binding of the chemokines, CCL3 and CCL4. In terms of processing, palmitoylation in the C-terminal is important for cell surface expression. Phosphorylation on serine residues in the C-terminal is stimulated by binding CC chemokines especially by APO-RANTES. Post-translationally, O-glycosylated, but not N-glycosylated. Ser-6 appears to be the major site even if Ser-7 may be also O-glycosylated. Also sialylated glycans present which contribute to chemokine binding. Thr-16 and Ser-17 may also be glycosylated and, if so, with small moieties such as a T-antigen.

Its subcellular location is the cell membrane. Functionally, receptor for a number of inflammatory CC-chemokines including CCL3/MIP-1-alpha, CCL4/MIP-1-beta and RANTES and subsequently transduces a signal by increasing the intracellular calcium ion level. May play a role in the control of granulocytic lineage proliferation or differentiation. Participates in T-lymphocyte migration to the infection site by acting as a chemotactic receptor. This is C-C chemokine receptor type 5 (CCR5) from Chlorocebus sabaeus (Green monkey).